The primary structure comprises 57 residues: Large ribosomal subunit protein bL32c (57 aa).

The tract at residues 1 to 21 is disordered; that stretch reads MAVPKKRTSKSKKNLRKNTWK.

Belongs to the bacterial ribosomal protein bL32 family.

Its subcellular location is the plastid. The protein localises to the chloroplast. The sequence is that of Large ribosomal subunit protein bL32c from Stigeoclonium helveticum (Green alga).